Consider the following 357-residue polypeptide: MNTLFMHCRPGFEGEVCSEISDLAARLNVAGYAKAKPATACAEFVCTEEDGAERLMRGQRFAELIFPRQWARGFFIDLPENDRISVILAHMSEFPVCGSLWLEVVDTNDGKELSNFCKKFEGPLRKALTGAGKLVEDTSKPRLLLTFKSGREVFLGLADAGNSAMWPMGIPRLKFPREAPSRSTLKLEEAWHHFIPRDQWEDRLHSDMTGVDLGAAPGGWTWQLVNRGMLVTAIDNGPMAESLMDTGLVQHLMADGFTFKPKQPVDWMVCDIVEKPARNAAMLEEWIGEGHCREAVVNLKLPMKQRYAEVKRLLERIADGFKARGIKVDIGCKQLYHDREEVTCHLRRLDVKKAKAR.

S-adenosyl-L-methionine is bound by residues Ser-183, 216–219 (APGG), Asp-235, Asp-255, and Asp-271. Lys-300 functions as the Proton acceptor in the catalytic mechanism.

Belongs to the class I-like SAM-binding methyltransferase superfamily. RNA methyltransferase RlmE family. RlmM subfamily. Monomer.

Its subcellular location is the cytoplasm. It carries out the reaction cytidine(2498) in 23S rRNA + S-adenosyl-L-methionine = 2'-O-methylcytidine(2498) in 23S rRNA + S-adenosyl-L-homocysteine + H(+). Its function is as follows. Catalyzes the 2'-O-methylation at nucleotide C2498 in 23S rRNA. The protein is Ribosomal RNA large subunit methyltransferase M of Pseudomonas fluorescens (strain Pf0-1).